Here is a 37-residue protein sequence, read N- to C-terminus: Cytochrome b6-f complex subunit 5 (37 aa).

A helical transmembrane segment spans residues 5–25 (LLSGIVPGLIPITLAGSFVIA).

The protein belongs to the PetG family. The 4 large subunits of the cytochrome b6-f complex are cytochrome b6, subunit IV (17 kDa polypeptide, PetD), cytochrome f and the Rieske protein, while the 4 small subunits are PetG, PetL, PetM and PetN. The complex functions as a dimer.

It is found in the plastid membrane. Functionally, component of the cytochrome b6-f complex, which mediates electron transfer between photosystem II (PSII) and photosystem I (PSI), cyclic electron flow around PSI, and state transitions. PetG is required for either the stability or assembly of the cytochrome b6-f complex. This chain is Cytochrome b6-f complex subunit 5, found in Aneura mirabilis (Parasitic liverwort).